Here is a 415-residue protein sequence, read N- to C-terminus: Histidine--tRNA ligase (415 aa).

This sequence belongs to the class-II aminoacyl-tRNA synthetase family. As to quaternary structure, homodimer.

The protein localises to the cytoplasm. It carries out the reaction tRNA(His) + L-histidine + ATP = L-histidyl-tRNA(His) + AMP + diphosphate + H(+). This Rickettsia bellii (strain RML369-C) protein is Histidine--tRNA ligase.